A 454-amino-acid chain; its full sequence is MERKDFETWLDNISVTFLSLTDLQKNETLDHLISLSGAVQLRHLSNNLETLLKRDFLKLLPLELSFYLLKWLDPQTLLTCCLVSKQWNKVISACTEVWQTACKNLGWQIDDSVQDALHWKKVYLKAILRMKQLEDHEAFETSSLIGHSARVYALYYKDGLLCTGSDDLSAKLWDVSTGQCVYGIQTHTCAAVKFDEQKLVTGSFDNTVACWEWSSGARTQHFRGHTGAVFSVDYNDELDILVSGSADFTVKVWALSAGTCLNTLTGHTEWVTKVVLQKCKVKSLLHSPGDYILLSADKYEIKIWPIGREINCKCLKTLSVSEDRSICLQPRLHFDGKYIVCSSALGLYQWDFASYDILRVIKTPEIANLALLGFGDIFALLFDNRYLYIMDLRTESLISRWPLPEYRKSKRGSSFLAGEASWLNGLDGHNDTGLVFATSMPDHSIHLVLWKEHG.

In terms of domain architecture, F-box spans 54–101; sequence RDFLKLLPLELSFYLLKWLDPQTLLTCCLVSKQWNKVISACTEVWQTA. WD repeat units follow at residues 139 to 175, 179 to 213, 217 to 255, 259 to 306, 313 to 352, 364 to 403, and 410 to 452; these read FETS…LWDV, QCVY…CWEW, ARTQ…VWAL, TCLN…IWPI, KCLK…QWDF, PEIA…RWPL, and KRGS…LWKE. Position 298 is an N6-acetyllysine (Lys-298).

Directly interacts with SKP1 and CUL1.

Substrate-recognition component of the SCF (SKP1-CUL1-F-box protein)-type E3 ubiquitin ligase complex. This chain is F-box/WD repeat-containing protein 2 (FBXW2), found in Homo sapiens (Human).